The sequence spans 29 residues: ATP synthase subunit 9, mitochondrial (29 aa).

It belongs to the ATPase C chain family. As to quaternary structure, F-type ATPases have 2 components, CF(1) - the catalytic core - and CF(0) - the membrane proton channel. CF(1) has five subunits: alpha(3), beta(3), gamma(1), delta(1), epsilon(1). CF(0) has three main subunits: a, b and c.

It localises to the mitochondrion membrane. In terms of biological role, mitochondrial membrane ATP synthase (F(1)F(0) ATP synthase or Complex V) produces ATP from ADP in the presence of a proton gradient across the membrane which is generated by electron transport complexes of the respiratory chain. F-type ATPases consist of two structural domains, F(1) - containing the extramembraneous catalytic core and F(0) - containing the membrane proton channel, linked together by a central stalk and a peripheral stalk. During catalysis, ATP synthesis in the catalytic domain of F(1) is coupled via a rotary mechanism of the central stalk subunits to proton translocation. Part of the complex F(0) domain. A homomeric c-ring of probably 10 subunits is part of the complex rotary element. This Wickerhamomyces pijperi (Yeast) protein is ATP synthase subunit 9, mitochondrial (ATP9).